The chain runs to 307 residues: MEAHKPVLFDEVMEGLAIRPDGIYVDGTFGRGGHSFGILQRLGPNGRLMAMDKDPDAVAVANKALFEDARFSIVHETFANLQKAVRDRGWEGKVNGILLDIGVSSPQLEDAKRGFSFSKDGPLDMRMNPKQSMDAASWINQAAMEDIRRVLWNYGEERFAKRIAQAIVNAREEKPITRTQELSDIVIKAYPQRKIKKHPATRTFQAIRIFINRELDELRECLPQCLETLAVGGRLCVISFHSLEDRLVKRFIQKESRDHLPREIPILAKDIKHRLKPLGSLIRPTEAEIKKNPRARSARLRIVEKLS.

Residues 32 to 34 (GGH), Asp52, Phe78, Asp100, and Gln107 each bind S-adenosyl-L-methionine.

It belongs to the methyltransferase superfamily. RsmH family.

Its subcellular location is the cytoplasm. The catalysed reaction is cytidine(1402) in 16S rRNA + S-adenosyl-L-methionine = N(4)-methylcytidine(1402) in 16S rRNA + S-adenosyl-L-homocysteine + H(+). Specifically methylates the N4 position of cytidine in position 1402 (C1402) of 16S rRNA. In Coxiella burnetii (strain Dugway 5J108-111), this protein is Ribosomal RNA small subunit methyltransferase H.